The primary structure comprises 264 residues: Small ribosomal subunit protein eS1 (264 aa).

The disordered stretch occupies residues 233-264 (GEGGGAGKPSGDEAGAKVERADGYEPPVQESV). The segment covering 242 to 255 (SGDEAGAKVERADG) has biased composition (basic and acidic residues).

This sequence belongs to the eukaryotic ribosomal protein eS1 family. Component of the small ribosomal subunit. Mature ribosomes consist of a small (40S) and a large (60S) subunit. The 40S subunit contains about 33 different proteins and 1 molecule of RNA (18S). The 60S subunit contains about 49 different proteins and 3 molecules of RNA (25S, 5.8S and 5S).

It is found in the cytoplasm. This Eimeria tenella (Coccidian parasite) protein is Small ribosomal subunit protein eS1.